We begin with the raw amino-acid sequence, 182 residues long: Ribosome maturation factor RimM (182 aa).

Residues Glu-102–Phe-182 form the PRC barrel domain.

This sequence belongs to the RimM family. As to quaternary structure, binds ribosomal protein uS19.

Its subcellular location is the cytoplasm. An accessory protein needed during the final step in the assembly of 30S ribosomal subunit, possibly for assembly of the head region. Essential for efficient processing of 16S rRNA. May be needed both before and after RbfA during the maturation of 16S rRNA. It has affinity for free ribosomal 30S subunits but not for 70S ribosomes. This Klebsiella pneumoniae (strain 342) protein is Ribosome maturation factor RimM.